Here is an 865-residue protein sequence, read N- to C-terminus: Protein translocase subunit SecA (865 aa).

Residues Gln-93, 111–115 (GEGKT), and Asp-501 contribute to the ATP site. Residues Cys-841, Cys-843, Cys-852, and Cys-853 each coordinate Zn(2+).

It belongs to the SecA family. In terms of assembly, monomer and homodimer. Part of the essential Sec protein translocation apparatus which comprises SecA, SecYEG and auxiliary proteins SecDF-YajC and YidC. Requires Zn(2+) as cofactor.

The protein localises to the cell inner membrane. It localises to the cytoplasm. The catalysed reaction is ATP + H2O + cellular proteinSide 1 = ADP + phosphate + cellular proteinSide 2.. Its function is as follows. Part of the Sec protein translocase complex. Interacts with the SecYEG preprotein conducting channel. Has a central role in coupling the hydrolysis of ATP to the transfer of proteins into and across the cell membrane, serving as an ATP-driven molecular motor driving the stepwise translocation of polypeptide chains across the membrane. In Helicobacter pylori (strain P12), this protein is Protein translocase subunit SecA.